The following is a 250-amino-acid chain: Methylthioribulose-1-phosphate dehydratase (250 aa).

Zn(2+)-binding residues include His-103 and His-105.

The protein belongs to the aldolase class II family. MtnB subfamily. The cofactor is Zn(2+).

The catalysed reaction is 5-(methylsulfanyl)-D-ribulose 1-phosphate = 5-methylsulfanyl-2,3-dioxopentyl phosphate + H2O. The protein operates within amino-acid biosynthesis; L-methionine biosynthesis via salvage pathway; L-methionine from S-methyl-5-thio-alpha-D-ribose 1-phosphate: step 2/6. Its function is as follows. Catalyzes the dehydration of methylthioribulose-1-phosphate (MTRu-1-P) into 2,3-diketo-5-methylthiopentyl-1-phosphate (DK-MTP-1-P). The chain is Methylthioribulose-1-phosphate dehydratase from Leptospira borgpetersenii serovar Hardjo-bovis (strain JB197).